Here is a 483-residue protein sequence, read N- to C-terminus: GTPase Der (483 aa).

EngA-type G domains follow at residues Phe3 to Arg167 and Leu212 to Asn387. GTP is bound by residues Gly9–Ser16, Asp56–Leu60, Asn119–Glu122, Gly218–Ser225, Asp265–Met269, and Asn330–Asp333. Positions Arg388 to Asp472 constitute a KH-like domain.

The protein belongs to the TRAFAC class TrmE-Era-EngA-EngB-Septin-like GTPase superfamily. EngA (Der) GTPase family. As to quaternary structure, associates with the 50S ribosomal subunit.

Its function is as follows. GTPase that plays an essential role in the late steps of ribosome biogenesis. The protein is GTPase Der of Brucella suis (strain ATCC 23445 / NCTC 10510).